The sequence spans 541 residues: CTP synthase (541 aa).

The tract at residues Met-1–Leu-265 is amidoligase domain. Position 13 (Ser-13) interacts with CTP. UTP is bound at residue Ser-13. ATP is bound at residue Ser-14–Leu-19. An L-glutamine-binding site is contributed by Tyr-54. Asp-71 is an ATP binding site. Residues Asp-71 and Glu-139 each contribute to the Mg(2+) site. Residues Asp-146–Glu-148, Lys-186–Gln-191, and Lys-222 contribute to the CTP site. UTP-binding positions include Lys-186 to Gln-191 and Lys-222. A Glutamine amidotransferase type-1 domain is found at Thr-290–Leu-540. Gly-352 contacts L-glutamine. Cys-379 (nucleophile; for glutamine hydrolysis) is an active-site residue. Residues Phe-380–Gln-383, Glu-403, and Arg-468 contribute to the L-glutamine site. Active-site residues include His-513 and Glu-515.

Belongs to the CTP synthase family. Homotetramer.

It catalyses the reaction UTP + L-glutamine + ATP + H2O = CTP + L-glutamate + ADP + phosphate + 2 H(+). The catalysed reaction is L-glutamine + H2O = L-glutamate + NH4(+). It carries out the reaction UTP + NH4(+) + ATP = CTP + ADP + phosphate + 2 H(+). Its pathway is pyrimidine metabolism; CTP biosynthesis via de novo pathway; CTP from UDP: step 2/2. Allosterically activated by GTP, when glutamine is the substrate; GTP has no effect on the reaction when ammonia is the substrate. The allosteric effector GTP functions by stabilizing the protein conformation that binds the tetrahedral intermediate(s) formed during glutamine hydrolysis. Inhibited by the product CTP, via allosteric rather than competitive inhibition. Functionally, catalyzes the ATP-dependent amination of UTP to CTP with either L-glutamine or ammonia as the source of nitrogen. Regulates intracellular CTP levels through interactions with the four ribonucleotide triphosphates. The polypeptide is CTP synthase (Paramagnetospirillum magneticum (strain ATCC 700264 / AMB-1) (Magnetospirillum magneticum)).